The primary structure comprises 120 residues: NAD(P)H-quinone oxidoreductase subunit 3, chloroplastic (120 aa).

3 helical membrane passes run 9–29 (IFWA…FISG), 64–84 (MFAL…PWAM), and 88–108 (VLGV…IVGL).

This sequence belongs to the complex I subunit 3 family. In terms of assembly, NDH is composed of at least 16 different subunits, 5 of which are encoded in the nucleus.

The protein localises to the plastid. It localises to the chloroplast thylakoid membrane. It carries out the reaction a plastoquinone + NADH + (n+1) H(+)(in) = a plastoquinol + NAD(+) + n H(+)(out). It catalyses the reaction a plastoquinone + NADPH + (n+1) H(+)(in) = a plastoquinol + NADP(+) + n H(+)(out). Functionally, NDH shuttles electrons from NAD(P)H:plastoquinone, via FMN and iron-sulfur (Fe-S) centers, to quinones in the photosynthetic chain and possibly in a chloroplast respiratory chain. The immediate electron acceptor for the enzyme in this species is believed to be plastoquinone. Couples the redox reaction to proton translocation, and thus conserves the redox energy in a proton gradient. This Panax ginseng (Korean ginseng) protein is NAD(P)H-quinone oxidoreductase subunit 3, chloroplastic.